A 518-amino-acid polypeptide reads, in one-letter code: Probable bifunctional methylthioribulose-1-phosphate dehydratase/enolase-phosphatase E1 (518 aa).

The methylthioribulose-1-phosphate dehydratase stretch occupies residues 1–247 (MAAAPPAVAV…AIKLHQIGLD (247 aa)). Residue cysteine 119 coordinates substrate. Zn(2+)-binding residues include histidine 137 and histidine 139. Residue glutamate 162 is the Proton donor/acceptor; for methylthioribulose-1-phosphate dehydratase activity of the active site. Histidine 212 lines the Zn(2+) pocket. The enolase-phosphatase E1 stretch occupies residues 279-518 (IVLDIEGTTT…FKTITSFAEI (240 aa)). Residues aspartate 282 and glutamate 284 each contribute to the Mg(2+) site. Residues 417-418 (SS) and lysine 451 contribute to the substrate site. A Mg(2+)-binding site is contributed by aspartate 477.

This sequence in the N-terminal section; belongs to the aldolase class II family. MtnB subfamily. In the C-terminal section; belongs to the HAD-like hydrolase superfamily. MasA/MtnC family. Requires Zn(2+) as cofactor. Mg(2+) is required as a cofactor.

It catalyses the reaction 5-(methylsulfanyl)-D-ribulose 1-phosphate = 5-methylsulfanyl-2,3-dioxopentyl phosphate + H2O. It carries out the reaction 5-methylsulfanyl-2,3-dioxopentyl phosphate + H2O = 1,2-dihydroxy-5-(methylsulfanyl)pent-1-en-3-one + phosphate. The protein operates within amino-acid biosynthesis; L-methionine biosynthesis via salvage pathway; L-methionine from S-methyl-5-thio-alpha-D-ribose 1-phosphate: step 2/6. It participates in amino-acid biosynthesis; L-methionine biosynthesis via salvage pathway; L-methionine from S-methyl-5-thio-alpha-D-ribose 1-phosphate: step 3/6. It functions in the pathway amino-acid biosynthesis; L-methionine biosynthesis via salvage pathway; L-methionine from S-methyl-5-thio-alpha-D-ribose 1-phosphate: step 4/6. This is Probable bifunctional methylthioribulose-1-phosphate dehydratase/enolase-phosphatase E1 from Populus trichocarpa (Western balsam poplar).